A 61-amino-acid chain; its full sequence is Large ribosomal subunit protein bL32 (61 aa).

Residues Met1–His19 are compositionally biased toward basic residues. Residues Met1 to Asp20 are disordered.

The protein belongs to the bacterial ribosomal protein bL32 family.

The sequence is that of Large ribosomal subunit protein bL32 from Porphyromonas gingivalis (strain ATCC 33277 / DSM 20709 / CIP 103683 / JCM 12257 / NCTC 11834 / 2561).